The primary structure comprises 129 residues: Flagellar assembly factor FliW (129 aa).

It belongs to the FliW family. In terms of assembly, interacts with flagellins FlaA and FlaB but not with FlaC; recognizes glycosylated and non-glycosylated FlaA equally. Interacts with CsrA. May form a 3-way complex of flagellin, FliS and FliW simultaneously in which FliS and FliW do not directly interact.

Its subcellular location is the cytoplasm. Functionally, acts as an anti-CsrA protein, binds CsrA and prevents it from repressing translation of its target genes, one of which is flagellin. Binds to flagellin and participates in the assembly of the flagellum. Its function is as follows. Overexpression leads to increased levels of FlaA and FlaB, but levels of FlaC remain stable. Involved in post-transcriptional regulation of flagellin biosynthesis. The chain is Flagellar assembly factor FliW from Campylobacter jejuni subsp. jejuni serotype O:6 (strain 81116 / NCTC 11828).